A 394-amino-acid chain; its full sequence is Cysteine desulfurase IscS (394 aa).

Pyridoxal 5'-phosphate is bound by residues 72 to 73 (GT), asparagine 152, glutamine 180, and 200 to 202 (SAH). An N6-(pyridoxal phosphate)lysine modification is found at lysine 203. Residue threonine 238 coordinates pyridoxal 5'-phosphate. The active-site Cysteine persulfide intermediate is the cysteine 326. Cysteine 326 contributes to the [2Fe-2S] cluster binding site.

It belongs to the class-V pyridoxal-phosphate-dependent aminotransferase family. NifS/IscS subfamily. In terms of assembly, homodimer. Forms a heterotetramer with IscU, interacts with other sulfur acceptors. Pyridoxal 5'-phosphate serves as cofactor.

Its subcellular location is the cytoplasm. It catalyses the reaction (sulfur carrier)-H + L-cysteine = (sulfur carrier)-SH + L-alanine. The protein operates within cofactor biosynthesis; iron-sulfur cluster biosynthesis. Master enzyme that delivers sulfur to a number of partners involved in Fe-S cluster assembly, tRNA modification or cofactor biosynthesis. Catalyzes the removal of elemental sulfur atoms from cysteine to produce alanine. Functions as a sulfur delivery protein for Fe-S cluster synthesis onto IscU, an Fe-S scaffold assembly protein, as well as other S acceptor proteins. The polypeptide is Cysteine desulfurase IscS (Dictyoglomus turgidum (strain DSM 6724 / Z-1310)).